The sequence spans 259 residues: Truncated Ankyrin repeat protein OPG003 (259 aa).

This sequence belongs to the orthopoxvirus OPG003 family.

The protein is Truncated Ankyrin repeat protein OPG003 (OPG003) of Vaccinia virus (strain Copenhagen) (VACV).